The following is a 232-amino-acid chain: Sec-independent protein translocase protein TatB (232 aa).

Residues 1-21 (MFDIGFGELMLLFVIGLVVLG) traverse the membrane as a helical segment. Disordered stretches follow at residues 108–129 (EPHTIHNPLVTDPEALHDGVTP) and 176–232 (AAST…NNDR). Composition is skewed to low complexity over residues 189–203 (ADSAANLATQAATPA) and 214–232 (RAATATGPASSTSPLNNDR).

The protein belongs to the TatB family. The Tat system comprises two distinct complexes: a TatABC complex, containing multiple copies of TatA, TatB and TatC subunits, and a separate TatA complex, containing only TatA subunits. Substrates initially bind to the TatABC complex, which probably triggers association of the separate TatA complex to form the active translocon.

The protein localises to the cell inner membrane. Part of the twin-arginine translocation (Tat) system that transports large folded proteins containing a characteristic twin-arginine motif in their signal peptide across membranes. Together with TatC, TatB is part of a receptor directly interacting with Tat signal peptides. TatB may form an oligomeric binding site that transiently accommodates folded Tat precursor proteins before their translocation. This chain is Sec-independent protein translocase protein TatB, found in Sodalis glossinidius (strain morsitans).